The following is a 466-amino-acid chain: 3-isopropylmalate dehydratase large subunit (466 aa).

Residues Cys-347, Cys-407, and Cys-410 each contribute to the [4Fe-4S] cluster site.

This sequence belongs to the aconitase/IPM isomerase family. LeuC type 1 subfamily. As to quaternary structure, heterodimer of LeuC and LeuD. [4Fe-4S] cluster serves as cofactor.

The catalysed reaction is (2R,3S)-3-isopropylmalate = (2S)-2-isopropylmalate. It participates in amino-acid biosynthesis; L-leucine biosynthesis; L-leucine from 3-methyl-2-oxobutanoate: step 2/4. In terms of biological role, catalyzes the isomerization between 2-isopropylmalate and 3-isopropylmalate, via the formation of 2-isopropylmaleate. The sequence is that of 3-isopropylmalate dehydratase large subunit from Shigella dysenteriae serotype 1 (strain Sd197).